We begin with the raw amino-acid sequence, 406 residues long: MFLNGFLRRLTRKIKQHGYAFFVVSVDGIATGVKGSVKGSFSVASLDPMVMENIEKCAILHNEDPHIAYPHEQPFALPRKGKAKSVKGFAKSMKGKAKENSKPKDILFPTFLDYSSQTAYIASILLNKYRIETFLLQNMAHLYRELIPCFDYDSWECVADALREKANEIFEANISRNLMLLILTGLYDNLVPHHQQEVFNKASNKFLKELEEKMDTSDPRVVIFLICLTMVLCAGGGFFSCKRHSNKKRSKASYTPPVPDNYAIFNDLGKYKAKVPVFEWQNAHAHSLGIMPLPPNLVNEMSSEEIKEAILEVPKEAAKGLVYGIPHFLIGSVVNSFTGVKYILMRVGTVVFFTIAGPFILLDYVKDRVREYYWFVTRNFSNFREFLFHAITSLLSLFPGGKMFQE.

The protein localises to the plastid. It is found in the chloroplast. This is an uncharacterized protein from Euglena gracilis.